The sequence spans 158 residues: Urease accessory protein UreE (158 aa).

It belongs to the UreE family.

It is found in the cytoplasm. Its function is as follows. Involved in urease metallocenter assembly. Binds nickel. Probably functions as a nickel donor during metallocenter assembly. The chain is Urease accessory protein UreE from Klebsiella pneumoniae (strain 342).